Reading from the N-terminus, the 629-residue chain is Serine/threonine-protein kinase ICK (629 aa).

Residues 4 to 284 (YTTIKQLGDG…ASQALRYPYF (281 aa)) enclose the Protein kinase domain. ATP-binding positions include 10–18 (LGDGTYGSV) and Lys33. Residue Asp125 is the Proton acceptor of the active site. Thr157 carries the post-translational modification Phosphothreonine. The residue at position 159 (Tyr159) is a Phosphotyrosine. Ser161 bears the Phosphoserine mark. 3 disordered regions span residues 292 to 322 (ISTQDSGKPQKDVQDKTGPPPYVKPAPPAQA), 454 to 482 (PSEPVGTGTSVSTQASSQRRDTPTLQSTA), and 579 to 629 (GYSS…PSRR). Positions 309–321 (GPPPYVKPAPPAQ) are enriched in pro residues. Over residues 460-482 (TGTSVSTQASSQRRDTPTLQSTA) the composition is skewed to polar residues.

Belongs to the protein kinase superfamily. CMGC Ser/Thr protein kinase family. CDC2/CDKX subfamily. Requires Mg(2+) as cofactor. Post-translationally, autophosphorylated on serine and threonine residues. Phosphorylation at Thr-157 increases kinase activity. As to expression, expressed in embryonic heart from day 11. Highly expressed in the uterus and at lower levels in brain, heart, lung, kidney, skeletal muscle, ovary and liver in adult tissues.

It localises to the cytoplasm. The protein localises to the cell projection. It is found in the cilium. The protein resides in the nucleus. Its subcellular location is the cytoskeleton. It localises to the cilium basal body. It carries out the reaction L-seryl-[protein] + ATP = O-phospho-L-seryl-[protein] + ADP + H(+). The enzyme catalyses L-threonyl-[protein] + ATP = O-phospho-L-threonyl-[protein] + ADP + H(+). Functionally, required for ciliogenesis, particularly in neuronal and retinal progenitor cells. Phosphorylates KIF3A. Involved in the control of ciliary length. Regulates the ciliary localization of SHH pathway components as well as the localization of IFT components at ciliary tips. May play a role in cardiac development. Regulates intraflagellar transport (IFT) speed and negatively regulates cilium length in a cAMP and mTORC1 signaling-dependent manner and this regulation requires its kinase activity. This Rattus norvegicus (Rat) protein is Serine/threonine-protein kinase ICK (Cilk1).